Here is a 276-residue protein sequence, read N- to C-terminus: Large ribosomal subunit protein uL2 (276 aa).

The segment at 219-276 (TVRGSAMNPNDHPHGGGEGRSPIGRPSPVTPWGKPALGYKTRKKNKHSDKFIVTGRKR) is disordered.

It belongs to the universal ribosomal protein uL2 family. Part of the 50S ribosomal subunit. Forms a bridge to the 30S subunit in the 70S ribosome.

Its function is as follows. One of the primary rRNA binding proteins. Required for association of the 30S and 50S subunits to form the 70S ribosome, for tRNA binding and peptide bond formation. It has been suggested to have peptidyltransferase activity; this is somewhat controversial. Makes several contacts with the 16S rRNA in the 70S ribosome. The polypeptide is Large ribosomal subunit protein uL2 (Alkaliphilus metalliredigens (strain QYMF)).